We begin with the raw amino-acid sequence, 191 residues long: Protein Ves (191 aa).

The protein belongs to the Ves family.

The protein is Protein Ves of Shigella flexneri.